The primary structure comprises 236 residues: DNA repair protein RecO (236 aa).

It belongs to the RecO family.

Functionally, involved in DNA repair and RecF pathway recombination. The polypeptide is DNA repair protein RecO (Photobacterium profundum (strain SS9)).